The chain runs to 428 residues: 3-phosphoshikimate 1-carboxyvinyltransferase (428 aa).

Residues Lys-19, Ser-20, and Arg-24 each contribute to the 3-phosphoshikimate site. Position 19 (Lys-19) interacts with phosphoenolpyruvate. Residues Gly-91 and Arg-119 each coordinate phosphoenolpyruvate. 3-phosphoshikimate is bound by residues Ser-164, Gln-166, Asp-312, and Lys-339. Phosphoenolpyruvate is bound at residue Gln-166. The Proton acceptor role is filled by Asp-312. Residues Arg-343 and Arg-386 each coordinate phosphoenolpyruvate.

The protein belongs to the EPSP synthase family. Monomer.

It localises to the cytoplasm. The catalysed reaction is 3-phosphoshikimate + phosphoenolpyruvate = 5-O-(1-carboxyvinyl)-3-phosphoshikimate + phosphate. It participates in metabolic intermediate biosynthesis; chorismate biosynthesis; chorismate from D-erythrose 4-phosphate and phosphoenolpyruvate: step 6/7. In terms of biological role, catalyzes the transfer of the enolpyruvyl moiety of phosphoenolpyruvate (PEP) to the 5-hydroxyl of shikimate-3-phosphate (S3P) to produce enolpyruvyl shikimate-3-phosphate and inorganic phosphate. In Bacillus subtilis (strain 168), this protein is 3-phosphoshikimate 1-carboxyvinyltransferase.